The sequence spans 219 residues: DnaJ homolog subfamily C member 30, mitochondrial (219 aa).

A mitochondrion-targeting transit peptide spans 1 to 38 (MAAARCLGWTLSPLWRWWQVRGLPPSSATGLCSRGRTY). The region spanning 42–107 (ALYELLGVPS…ILRRKYDRGL (66 aa)) is the J domain. A disordered region spans residues 109–148 (SDQDLRGPGVKPSKTPVADPAPPRPPPYTPRAPGGSRASP). Over residues 127-138 (DPAPPRPPPYTP) the composition is skewed to pro residues. Residues 202–218 (ATFFVVLFLIFVFVGFR) traverse the membrane as a helical segment.

As to quaternary structure, associates with the ATP synthase complex. Interacts with MT-ATP6; interaction is direct. Interacts with ATP5MC2; interaction is direct. As to expression, in brain, expressed in gray matter structures.

It is found in the mitochondrion inner membrane. Mitochondrial protein enriched in neurons that acts as a regulator of mitochondrial respiration. Associates with the ATP synthase complex and facilitates ATP synthesis. May be a chaperone protein involved in the turnover of the subunits of mitochondrial complex I N-module. It facilitates the degradation of N-module subunits damaged by oxidative stress, and contributes to complex I functional efficiency. This Mus musculus (Mouse) protein is DnaJ homolog subfamily C member 30, mitochondrial.